A 196-amino-acid chain; its full sequence is CMRF35-like molecule 2 (196 aa).

The N-terminal stretch at 1–17 (MRLCAGLLLLCFQGCLS) is a signal peptide. The Ig-like V-type domain maps to 18 to 122 (LTGPGSVSGY…DSWSRDPSVS (105 aa)). Over 18–171 (LTGPGSVSGY…QLWSLLSSIQ (154 aa)) the chain is Extracellular. C36 and C104 form a disulfide bridge. The N-linked (GlcNAc...) asparagine glycan is linked to N84. Residues 172–192 (FQVLVFLKLPLFLSMLCAIFW) traverse the membrane as a helical segment. Residues 193–196 (VNRL) are Cytoplasmic-facing.

Belongs to the CD300 family. Interacts with TYROBP.

It is found in the cell membrane. Probably acts as an activating receptor. The sequence is that of CMRF35-like molecule 2 (Cd300e) from Mus musculus (Mouse).